Consider the following 430-residue polypeptide: APTKAPDVFPIISGCRHPKDNSPVVLACLITGYHPTSVTVTWYMGTQSQPQRTFPEIQRRDSYYMTSSQLSTPLQQWRQGEYKCVVQHTASKSKKEIFRWPESPKAQASSVPTAQPQAEGSLAKATTAPATTRNTGRGGEEKKKEKEKEEQEERETKTPECPSHTQPLGVYLLTPAVQDLWLRDKATFTCFVVGSDLKDAHLTWEVAGKVPTGGVEEGLLERHSNGSQSQHSRLTLPRSLWNAGTSVTCTLNHPSLPPQRLMALREPAAQAPVKLSLNLLASSDPPEAASWLLCEVSGFSPPNILLMWLEDQREVNTSGFAPARPPPQPRSTTFWAWSVLRVPAPPSPQPATYTCVVSHEDSRTLLNASRSLEVSYLAMTPLIPQSKDENSDDYTTFDDVGSLWTTLSTFVALFILTLLYSGIVTFIKVK.

The Extracellular segment spans residues 1 to 406 (APTKAPDVFP…FDDVGSLWTT (406 aa)). The 93-residue stretch at 6–98 (PDVFPIISGC…TASKSKKEIF (93 aa)) folds into the Ig-like 1 domain. An intrachain disulfide couples Cys-28 to Cys-84. The tract at residues 96-167 (EIFRWPESPK…TPECPSHTQP (72 aa)) is disordered. Polar residues predominate over residues 106–118 (AQASSVPTAQPQA). Residues Ser-109 and Ser-110 are each glycosylated (O-linked (GalNAc...) serine). O-linked (GalNAc...) threonine glycosylation is found at Thr-113, Thr-126, Thr-127, Thr-131, and Thr-132. Positions 138–158 (GGEEKKKEKEKEEQEERETKT) are enriched in basic and acidic residues. Ig-like domains are found at residues 175–263 (PAVQ…RLMA) and 267–373 (PAAQ…RSLE). Disulfide bonds link Cys-190/Cys-249 and Cys-294/Cys-355. N-linked (GlcNAc...) asparagine glycosylation is found at Asn-225, Asn-316, and Asn-367. A helical transmembrane segment spans residues 407-427 (LSTFVALFILTLLYSGIVTFI). The Cytoplasmic segment spans residues 428 to 430 (KVK).

In terms of assembly, immunoglobulins are composed of two identical heavy chains and two identical light chains; disulfide-linked. An IgD molecule contains thus a delta heavy chain combined with either a kappa or a lambda light chains. Kappa light chains are found predominantly on the membrane IgD (mIgD) form and lambda on the secreted IgD (sIgD) form, this fact is poorly understood. Membrane-bound IgD molecules are non-covalently associated with a heterodimer of CD79A and CD79B.

The protein localises to the secreted. It is found in the cell membrane. Functionally, constant region of immunoglobulin heavy chains. Immunoglobulins, also known as antibodies, are membrane-bound or secreted glycoproteins produced by B lymphocytes. In the recognition phase of humoral immunity, the membrane-bound immunoglobulins serve as receptors which, upon binding of a specific antigen, trigger the clonal expansion and differentiation of B lymphocytes into immunoglobulins-secreting plasma cells. Secreted immunoglobulins mediate the effector phase of humoral immunity, which results in the elimination of bound antigens. The antigen binding site is formed by the variable domain of one heavy chain, together with that of its associated light chain. Thus, each immunoglobulin has two antigen binding sites with remarkable affinity for a particular antigen. The variable domains are assembled by a process called V-(D)-J rearrangement and can then be subjected to somatic hypermutations which, after exposure to antigen and selection, allow affinity maturation for a particular antigen. IgD is the major antigen receptor isotype on the surface of most peripheral B-cells, where it is coexpressed with IgM. The membrane-bound IgD (mIgD) induces the phosphorylation of CD79A and CD79B by the Src family of protein tyrosine kinases. Soluble IgD (sIgD) concentration in serum below those of IgG, IgA, and IgM but much higher than that of IgE. IgM and IgD molecules present on B cells have identical V regions and antigen-binding sites. After the antigen binds to the B-cell receptor, the secreted form sIgD is shut off. IgD is a potent inducer of TNF, IL1B, and IL1RN. IgD also induces release of IL6, IL10, and LIF from peripheral blood mononuclear cells. Monocytes seem to be the main producers of cytokines in vitro in the presence of IgD. This is Immunoglobulin heavy constant delta from Homo sapiens (Human).